The following is a 417-amino-acid chain: UDP-N-acetylglucosamine 1-carboxyvinyltransferase (417 aa).

22 to 23 (KN) is a phosphoenolpyruvate binding site. Arginine 92 provides a ligand contact to UDP-N-acetyl-alpha-D-glucosamine. Cysteine 116 functions as the Proton donor in the catalytic mechanism. Cysteine 116 bears the 2-(S-cysteinyl)pyruvic acid O-phosphothioketal mark. 2 residues coordinate UDP-N-acetyl-alpha-D-glucosamine: aspartate 304 and isoleucine 326.

This sequence belongs to the EPSP synthase family. MurA subfamily.

It localises to the cytoplasm. The enzyme catalyses phosphoenolpyruvate + UDP-N-acetyl-alpha-D-glucosamine = UDP-N-acetyl-3-O-(1-carboxyvinyl)-alpha-D-glucosamine + phosphate. Its pathway is cell wall biogenesis; peptidoglycan biosynthesis. Functionally, cell wall formation. Adds enolpyruvyl to UDP-N-acetylglucosamine. The polypeptide is UDP-N-acetylglucosamine 1-carboxyvinyltransferase (Desulforapulum autotrophicum (strain ATCC 43914 / DSM 3382 / VKM B-1955 / HRM2) (Desulfobacterium autotrophicum)).